The primary structure comprises 96 residues: Large ribosomal subunit protein eL21 (96 aa).

The protein belongs to the eukaryotic ribosomal protein eL21 family.

The sequence is that of Large ribosomal subunit protein eL21 from Methanosphaerula palustris (strain ATCC BAA-1556 / DSM 19958 / E1-9c).